We begin with the raw amino-acid sequence, 257 residues long: Beta-fibrinogenase mucrofibrase-5 (257 aa).

The N-terminal stretch at 1-18 (MVLIRVLANLLILQLSYA) is a signal peptide. The propeptide occupies 19-24 (QKSSEL). One can recognise a Peptidase S1 domain in the interval 25-248 (IIGGDECNIN…HLDWIKGIIA (224 aa)). 6 disulfides stabilise this stretch: Cys-31–Cys-162, Cys-49–Cys-65, Cys-97–Cys-255, Cys-141–Cys-209, Cys-173–Cys-188, and Cys-199–Cys-224. Catalysis depends on His-64, which acts as the Charge relay system. Asn-102 is a glycosylation site (N-linked (GlcNAc...) asparagine). The active-site Charge relay system is the Asp-109. The active-site Charge relay system is the Ser-203.

Belongs to the peptidase S1 family. Snake venom subfamily. In terms of assembly, monomer. In terms of tissue distribution, expressed by the venom gland.

The protein localises to the secreted. Snake venom serine protease with strong beta-fibrinogenolytic activities, angiotensin I (AGT)-degrading activities and strong kallikrein-like activities in vitro, releasing bradykinin from kininogen (KNG1). Intravenous injection mildly lowers blood pressure in experimental rats, which may be explained by the action on angiotensin I and kininogen. Exhibits amidase activity against N-benzoyl-Pro-Phe-Arg-p-nitroanilide in vitro. In Protobothrops mucrosquamatus (Taiwan habu), this protein is Beta-fibrinogenase mucrofibrase-5.